We begin with the raw amino-acid sequence, 1383 residues long: DNA-directed RNA polymerase subunit beta (1383 aa).

The protein belongs to the RNA polymerase beta chain family. The RNAP catalytic core consists of 2 alpha, 1 beta, 1 beta' and 1 omega subunit. When a sigma factor is associated with the core the holoenzyme is formed, which can initiate transcription.

The enzyme catalyses RNA(n) + a ribonucleoside 5'-triphosphate = RNA(n+1) + diphosphate. Its function is as follows. DNA-dependent RNA polymerase catalyzes the transcription of DNA into RNA using the four ribonucleoside triphosphates as substrates. This chain is DNA-directed RNA polymerase subunit beta, found in Bartonella tribocorum (strain CIP 105476 / IBS 506).